A 113-amino-acid polypeptide reads, in one-letter code: UPF0060 membrane protein Arth_4423 (113 aa).

Transmembrane regions (helical) follow at residues 7–27 (VLLF…VWQA), 33–53 (AWWW…VATL), 62–82 (ILAA…MVFD), and 91–111 (VIGS…PRGT).

It belongs to the UPF0060 family.

It localises to the cell membrane. The polypeptide is UPF0060 membrane protein Arth_4423 (Arthrobacter sp. (strain FB24)).